A 214-amino-acid polypeptide reads, in one-letter code: Cytochrome c biogenesis ATP-binding export protein CcmA (214 aa).

One can recognise an ABC transporter domain in the interval 16-212 (LRVSGLSLSR…PDAKRIDLGA (197 aa)). 48–55 (GPNGTGKT) contributes to the ATP binding site.

It belongs to the ABC transporter superfamily. CcmA exporter (TC 3.A.1.107) family. As to quaternary structure, the complex is composed of two ATP-binding proteins (CcmA) and two transmembrane proteins (CcmB).

It localises to the cell inner membrane. It carries out the reaction heme b(in) + ATP + H2O = heme b(out) + ADP + phosphate + H(+). Its function is as follows. Part of the ABC transporter complex CcmAB involved in the biogenesis of c-type cytochromes; once thought to export heme, this seems not to be the case, but its exact role is uncertain. Responsible for energy coupling to the transport system. The chain is Cytochrome c biogenesis ATP-binding export protein CcmA from Maricaulis maris (strain MCS10) (Caulobacter maris).